We begin with the raw amino-acid sequence, 505 residues long: Trans-cinnamate 4-monooxygenase (505 aa).

A helical transmembrane segment spans residues 3-23; the sequence is LLLLEKTLLGLFIAAITAIAI. Residues 213–218 and alanine 306 contribute to the (E)-cinnamate site; that span reads RSRLAQ. Position 447 (cysteine 447) interacts with heme.

Belongs to the cytochrome P450 family. It depends on heme as a cofactor.

The protein localises to the membrane. It carries out the reaction (E)-cinnamate + reduced [NADPH--hemoprotein reductase] + O2 = (E)-4-coumarate + oxidized [NADPH--hemoprotein reductase] + H2O + H(+). The protein operates within phenylpropanoid metabolism; trans-4-coumarate biosynthesis; trans-4-coumarate from trans-cinnamate: step 1/1. In terms of biological role, catalyzes the first oxidative step of the phenylpropanoid pathway in higher plants by transforming trans-cinnamate into p-coumarate. The compounds formed by this pathway are essential components for lignification, pollination, and defense against ultraviolet light, predators and pathogens. This Glycyrrhiza echinata (Licorice) protein is Trans-cinnamate 4-monooxygenase (CYP73A14).